The chain runs to 483 residues: Regulatory protein ViaA (483 aa).

It belongs to the ViaA family. Homodimer. Interacts with RavA.

The protein localises to the cytoplasm. In terms of biological role, component of the RavA-ViaA chaperone complex, which may act on the membrane to optimize the function of some of the respiratory chains. ViaA stimulates the ATPase activity of RavA. This is Regulatory protein ViaA from Shigella dysenteriae serotype 1 (strain Sd197).